The following is a 372-amino-acid chain: B2 bradykinin receptor (372 aa).

Residues methionine 1–glutamine 34 lie on the Extracellular side of the membrane. Residues asparagine 3 and asparagine 12 are each glycosylated (N-linked (GlcNAc...) asparagine). The chain crosses the membrane as a helical span at residues alanine 35–leucine 58. At histidine 59–glutamate 67 the chain is on the cytoplasmic side. The chain crosses the membrane as a helical span at residues isoleucine 68–alanine 92. The Extracellular portion of the chain corresponds to asparagine 93–arginine 105. A disulfide bridge connects residues cysteine 104 and cysteine 185. The helical transmembrane segment at methionine 106–isoleucine 127 threads the bilayer. At aspartate 128 to lysine 149 the chain is on the cytoplasmic side. Tyrosine 130 carries the phosphotyrosine modification. The helical transmembrane segment at leucine 150–methionine 172 threads the bilayer. Residues lysine 173 to glutamine 195 lie on the Extracellular side of the membrane. N-linked (GlcNAc...) asparagine glycosylation is present at asparagine 181. Residues valine 196–methionine 222 traverse the membrane as a helical segment. Topologically, residues glutamine 223–arginine 241 are cytoplasmic. Residues alanine 242–leucine 266 form a helical membrane-spanning segment. At aspartate 267 to aspartate 284 the chain is on the extracellular side. The chain crosses the membrane as a helical span at residues leucine 285–valine 308. The Cytoplasmic segment spans residues glycine 309–serine 364. Position 320 is a phosphotyrosine (tyrosine 320). Residue cysteine 324 is the site of S-palmitoyl cysteine attachment. Residue serine 339 is modified to Phosphoserine. The residue at position 342 (threonine 342) is a Phosphothreonine. A phosphoserine; by GRK6 mark is found at serine 346 and serine 348.

This sequence belongs to the G-protein coupled receptor 1 family. Bradykinin receptor subfamily. BDKRB2 sub-subfamily. In terms of assembly, forms a complex with PECAM1 and GNAQ. Interacts with PECAM1.

Its subcellular location is the cell membrane. Functionally, receptor for bradykinin. It is associated with G proteins that activate a phosphatidylinositol-calcium second messenger system. This Cavia porcellus (Guinea pig) protein is B2 bradykinin receptor (BDKRB2).